A 59-amino-acid chain; its full sequence is Large ribosomal subunit protein bL32C (59 aa).

Belongs to the bacterial ribosomal protein bL32 family.

This chain is Large ribosomal subunit protein bL32C (rpmF3), found in Enterococcus faecalis (strain ATCC 700802 / V583).